Reading from the N-terminus, the 268-residue chain is Tryptophan synthase alpha chain (268 aa).

Active-site proton acceptor residues include Glu-49 and Asp-60.

This sequence belongs to the TrpA family. As to quaternary structure, tetramer of two alpha and two beta chains.

It catalyses the reaction (1S,2R)-1-C-(indol-3-yl)glycerol 3-phosphate + L-serine = D-glyceraldehyde 3-phosphate + L-tryptophan + H2O. It participates in amino-acid biosynthesis; L-tryptophan biosynthesis; L-tryptophan from chorismate: step 5/5. Its function is as follows. The alpha subunit is responsible for the aldol cleavage of indoleglycerol phosphate to indole and glyceraldehyde 3-phosphate. This chain is Tryptophan synthase alpha chain, found in Shigella dysenteriae serotype 1 (strain Sd197).